Here is a 608-residue protein sequence, read N- to C-terminus: Leucine aminopeptidase 2 (608 aa).

Substrate is bound by residues Gln-134–Gln-136 and Pro-269–Glu-274. His-298 is a binding site for Zn(2+). Glu-299 functions as the Proton acceptor in the catalytic mechanism. Zn(2+) is bound by residues His-302 and Glu-321. Residue Tyr-386 is the Proton donor of the active site.

The protein belongs to the peptidase M1 family. The cofactor is Zn(2+).

It localises to the cytoplasm. The protein localises to the nucleus. The catalysed reaction is an epoxide + H2O = an ethanediol. Aminopeptidase that preferentially cleaves di- and tripeptides. Also has low epoxide hydrolase activity (in vitro). Can hydrolyze the epoxide leukotriene LTA(4) but it forms preferentially 5,6-dihydroxy-7,9,11,14-eicosatetraenoic acid rather than the cytokine leukotriene B(4) as the product compared to the homologous mammalian enzyme (in vitro). The protein is Leucine aminopeptidase 2 of Sclerotinia sclerotiorum (strain ATCC 18683 / 1980 / Ss-1) (White mold).